We begin with the raw amino-acid sequence, 2168 residues long: Genome polyprotein (2168 aa).

Positions 1 to 20 are disordered; the sequence is MGMQMSKNTAGSHTTVTQAS. Gly-2 carries N-myristoyl glycine; by host lipidation. Topologically, residues 2 to 1479 are cytoplasmic; sequence GMQMSKNTAG…NVSIATTILS (1478 aa). Amphipathic alpha-helix stretches follow at residues 551-567 and 554-575; these read ALQA…ISSV and APVE…TAQD. Positions 576 to 589 are enriched in polar residues; the sequence is TQPSSHNISTSETP. The tract at residues 576–607 is disordered; the sequence is TQPSSHNISTSETPALQAAETGASSNASDEGM. Active-site for protease 2A activity residues include His-856 and Asp-874. Zn(2+) is bound by residues Cys-891 and Cys-893. Cys-945 serves as the catalytic For protease 2A activity. The Zn(2+) site is built by Cys-951 and His-953. Residues 1085–1157 form a membrane-binding region; sequence GDDWLKKFTS…EHSCPTTEQQ (73 aa). Residues 1085–1223 are oligomerization; sequence GDDWLKKFTS…TAGTGKSLAT (139 aa). The segment at 1106–1110 is RNA-binding; the sequence is AEKIM. An SF3 helicase domain is found at 1189-1347; it reads EKRILGYIQF…YKTHNGTLDV (159 aa). Zn(2+) is bound by residues Cys-1354, Cys-1365, and Cys-1370. Residues 1354–1370 form a C4-type; degenerate zinc finger; the sequence is CEDCCPANFKTCMPLIC. The segment at 1397–1404 is RNA-binding; that stretch reads EWKRRNQV. The segment at 1408 to 1413 is oligomerization; the sequence is YVRLFQ. The stretch at 1480-1495 is an intramembrane region; sequence SLVLLTSVITLVYLVY. The Cytoplasmic portion of the chain corresponds to 1496-2168; sequence RLFAGYQGPY…SLLREWYEKF (673 aa). Tyr-1505 is subject to O-(5'-phospho-RNA)-tyrosine. One can recognise a Peptidase C3 domain in the interval 1525 to 1703; sequence GPLMDFGVGM…FCAALKRSYF (179 aa). Catalysis depends on for protease 3C activity residues His-1564, Glu-1595, and Cys-1671. The RdRp catalytic domain maps to 1934–2048; the sequence is GELFGFDYTA…ASYPYRIDPA (115 aa). 2 residues coordinate Mg(2+): Asp-1940 and Asp-2035.

The protein belongs to the picornaviruses polyprotein family. Interacts with capsid protein VP1 and capsid protein VP3 to form heterotrimeric protomers. As to quaternary structure, interacts with capsid protein VP0, and capsid protein VP3 to form heterotrimeric protomers. Five protomers subsequently associate to form pentamers which serve as building blocks for the capsid. Interacts with capsid protein VP2, capsid protein VP3 and capsid protein VP4 following cleavage of capsid protein VP0. In terms of assembly, interacts with capsid protein VP1 and capsid protein VP3 in the mature capsid. Interacts with capsid protein VP0 and capsid protein VP1 to form heterotrimeric protomers. Five protomers subsequently associate to form pentamers which serve as building blocks for the capsid. Interacts with capsid protein VP4 in the mature capsid. Interacts with protein 2C; this interaction may be important for virion morphogenesis. As to quaternary structure, interacts with capsid protein VP1 and capsid protein VP3. In terms of assembly, homodimer. Homohexamer; forms a hexameric ring structure with 6-fold symmetry characteristic of AAA+ ATPases. Interacts (via N-terminus) with host RTN3 (via reticulon domain); this interaction is important for viral replication. Interacts with capsid protein VP3; this interaction may be important for virion morphogenesis. As to quaternary structure, interacts with protein 3CD. In terms of assembly, homodimer. Interacts with host GBF1. Interacts (via GOLD domain) with host ACBD3 (via GOLD domain); this interaction allows the formation of a viral protein 3A/ACBD3 heterotetramer with a 2:2 stoichiometry, which will stimulate the recruitment of host PI4KB in order to synthesize PI4P at the viral RNA replication sites. Interacts with RNA-directed RNA polymerase. As to quaternary structure, interacts with protein 3AB and with RNA-directed RNA polymerase. In terms of assembly, interacts with Viral protein genome-linked and with protein 3CD. It depends on Mg(2+) as a cofactor. In terms of processing, specific enzymatic cleavages in vivo by the viral proteases yield processing intermediates and the mature proteins. Myristoylation is required for the formation of pentamers during virus assembly. Further assembly of 12 pentamers and a molecule of genomic RNA generates the provirion. Post-translationally, during virion maturation, immature virions are rendered infectious following cleavage of VP0 into VP4 and VP2. This maturation seems to be an autocatalytic event triggered by the presence of RNA in the capsid and it is followed by a conformational change infectious virion. In terms of processing, myristoylation is required during RNA encapsidation and formation of the mature virus particle. VPg is uridylylated by the polymerase into VPg-pUpU. This acts as a nucleotide-peptide primer for the genomic RNA replication.

It is found in the virion. The protein localises to the host cytoplasm. Its subcellular location is the host cytoplasmic vesicle membrane. The protein resides in the host nucleus. The catalysed reaction is a ribonucleoside 5'-triphosphate + H2O = a ribonucleoside 5'-diphosphate + phosphate + H(+). It carries out the reaction Selective cleavage of Tyr-|-Gly bond in the picornavirus polyprotein.. It catalyses the reaction RNA(n) + a ribonucleoside 5'-triphosphate = RNA(n+1) + diphosphate. The enzyme catalyses Selective cleavage of Gln-|-Gly bond in the poliovirus polyprotein. In other picornavirus reactions Glu may be substituted for Gln, and Ser or Thr for Gly.. Its activity is regulated as follows. Replication or transcription is subject to high level of random mutations by the nucleotide analog ribavirin. Functionally, forms an icosahedral capsid of pseudo T=3 symmetry with capsid proteins VP2 and VP3. The capsid is 300 Angstroms in diameter, composed of 60 copies of each capsid protein and enclosing the viral positive strand RNA genome. Capsid protein VP1 mainly forms the vertices of the capsid. Capsid protein VP1 interacts with host cell receptor to provide virion attachment to target host cells. This attachment induces virion internalization. Tyrosine kinases are probably involved in the entry process. After binding to its receptor, the capsid undergoes conformational changes. Capsid protein VP1 N-terminus (that contains an amphipathic alpha-helix) and capsid protein VP4 are externalized. Together, they shape a pore in the host membrane through which viral genome is translocated to host cell cytoplasm. In terms of biological role, forms an icosahedral capsid of pseudo T=3 symmetry with capsid proteins VP2 and VP3. The capsid is 300 Angstroms in diameter, composed of 60 copies of each capsid protein and enclosing the viral positive strand RNA genome. Lies on the inner surface of the capsid shell. After binding to the host receptor, the capsid undergoes conformational changes. Capsid protein VP4 is released, Capsid protein VP1 N-terminus is externalized, and together, they shape a pore in the host membrane through which the viral genome is translocated into the host cell cytoplasm. Its function is as follows. Component of immature procapsids, which is cleaved into capsid proteins VP4 and VP2 after maturation. Allows the capsid to remain inactive before the maturation step. Functionally, cysteine protease that cleaves viral polyprotein and specific host proteins. It is responsible for the autocatalytic cleavage between the P1 and P2 regions, which is the first cleavage occurring in the polyprotein. Also cleaves the host translation initiation factor EIF4G1, in order to shut down the capped cellular mRNA translation. Inhibits the host nucleus-cytoplasm protein and RNA trafficking by cleaving host members of the nuclear pores. Counteracts stress granule formation probably by antagonizing its assembly or promoting its dissassembly. In terms of biological role, plays an essential role in the virus replication cycle by acting as a viroporin. Creates a pore in the host endoplasmic reticulum and as a consequence releases Ca2+ in the cytoplasm of infected cell. In turn, high levels of cytoplasmic calcium may trigger membrane trafficking and transport of viral ER-associated proteins to viroplasms, sites of viral genome replication. Induces and associates with structural rearrangements of intracellular membranes. Displays RNA-binding, nucleotide binding and NTPase activities. May play a role in virion morphogenesis and viral RNA encapsidation by interacting with the capsid protein VP3. Its function is as follows. Localizes the viral replication complex to the surface of membranous vesicles. Together with protein 3CD binds the Cis-Active RNA Element (CRE) which is involved in RNA synthesis initiation. Acts as a cofactor to stimulate the activity of 3D polymerase, maybe through a nucleid acid chaperone activity. Functionally, localizes the viral replication complex to the surface of membranous vesicles. It inhibits host cell endoplasmic reticulum-to-Golgi apparatus transport and causes the disassembly of the Golgi complex, possibly through GBF1 interaction. This would result in depletion of MHC, trail receptors and IFN receptors at the host cell surface. Plays an essential role in viral RNA replication by recruiting ACBD3 and PI4KB at the viral replication sites, thereby allowing the formation of the rearranged membranous structures where viral replication takes place. In terms of biological role, acts as a primer for viral RNA replication and remains covalently bound to viral genomic RNA. VPg is uridylylated prior to priming replication into VPg-pUpU. The oriI viral genomic sequence may act as a template for this. The VPg-pUpU is then used as primer on the genomic RNA poly(A) by the RNA-dependent RNA polymerase to replicate the viral genome. During genome replication, the VPg-RNA linkage is removed by the host TDP2, thereby accelerating replication. During the late stage of the replication cycle, host TDP2 is excluded from sites of viral RNA synthesis and encapsidation, allowing for the generation of progeny virions. Involved in the viral replication complex and viral polypeptide maturation. It exhibits protease activity with a specificity and catalytic efficiency that is different from protease 3C. Protein 3CD lacks polymerase activity. Protein 3CD binds to the 5'UTR of the viral genome. Its function is as follows. Replicates the viral genomic RNA on the surface of intracellular membranes. May form linear arrays of subunits that propagate along a strong head-to-tail interaction called interface-I. Covalently attaches UMP to a tyrosine of VPg, which is used to prime RNA synthesis. The positive stranded RNA genome is first replicated at virus induced membranous vesicles, creating a dsRNA genomic replication form. This dsRNA is then used as template to synthesize positive stranded RNA genomes. ss(+)RNA genomes are either translated, replicated or encapsidated. Functionally, major viral protease that mediates proteolytic processing of the polyprotein. Cleaves host EIF5B, contributing to host translation shutoff. Also cleaves host PABPC1, contributing to host translation shutoff. Cleaves host NLRP1, triggers host N-glycine-mediated degradation of the autoinhibitory NLRP1 N-terminal fragment. This Sus scrofa (Pig) protein is Genome polyprotein.